We begin with the raw amino-acid sequence, 426 residues long: Enolase (426 aa).

Gln-163 is a binding site for (2R)-2-phosphoglycerate. Glu-205 acts as the Proton donor in catalysis. Residues Asp-242, Glu-285, and Asp-312 each contribute to the Mg(2+) site. Residues Lys-337, Arg-366, Ser-367, and Lys-388 each coordinate (2R)-2-phosphoglycerate. The active-site Proton acceptor is Lys-337.

Belongs to the enolase family. The cofactor is Mg(2+).

The protein resides in the cytoplasm. It localises to the secreted. Its subcellular location is the cell surface. It carries out the reaction (2R)-2-phosphoglycerate = phosphoenolpyruvate + H2O. It participates in carbohydrate degradation; glycolysis; pyruvate from D-glyceraldehyde 3-phosphate: step 4/5. Its function is as follows. Catalyzes the reversible conversion of 2-phosphoglycerate (2-PG) into phosphoenolpyruvate (PEP). It is essential for the degradation of carbohydrates via glycolysis. This is Enolase from Caulobacter vibrioides (strain ATCC 19089 / CIP 103742 / CB 15) (Caulobacter crescentus).